Here is an 89-residue protein sequence, read N- to C-terminus: Large ribosomal subunit protein bL27 (89 aa).

The segment at 1–21 (MAHKKAGGSSRNGRDSAGRRL) is disordered.

It belongs to the bacterial ribosomal protein bL27 family.

In Roseobacter denitrificans (strain ATCC 33942 / OCh 114) (Erythrobacter sp. (strain OCh 114)), this protein is Large ribosomal subunit protein bL27.